We begin with the raw amino-acid sequence, 326 residues long: Phospho-N-acetylmuramoyl-pentapeptide-transferase (326 aa).

9 consecutive transmembrane segments (helical) span residues 3–23 (ISIS…PAFI), 51–71 (TMGG…FALF), 79–99 (VGMI…DDFL), 115–135 (LALQ…GGDI), 138–158 (VFGY…FWLV), 169–189 (GVDG…GVIA), 195–215 (MDIL…FIFN), 221–243 (VFMG…MALH), and 306–326 (FFFW…LYLM).

Belongs to the glycosyltransferase 4 family. MraY subfamily. Mg(2+) serves as cofactor.

The protein resides in the cell membrane. It carries out the reaction UDP-N-acetyl-alpha-D-muramoyl-L-alanyl-gamma-D-glutamyl-L-lysyl-D-alanyl-D-alanine + di-trans,octa-cis-undecaprenyl phosphate = Mur2Ac(oyl-L-Ala-gamma-D-Glu-L-Lys-D-Ala-D-Ala)-di-trans,octa-cis-undecaprenyl diphosphate + UMP. It participates in cell wall biogenesis; peptidoglycan biosynthesis. In terms of biological role, catalyzes the initial step of the lipid cycle reactions in the biosynthesis of the cell wall peptidoglycan: transfers peptidoglycan precursor phospho-MurNAc-pentapeptide from UDP-MurNAc-pentapeptide onto the lipid carrier undecaprenyl phosphate, yielding undecaprenyl-pyrophosphoryl-MurNAc-pentapeptide, known as lipid I. This Streptococcus pneumoniae serotype 2 (strain D39 / NCTC 7466) protein is Phospho-N-acetylmuramoyl-pentapeptide-transferase.